Here is a 65-residue protein sequence, read N- to C-terminus: Large ribosomal subunit protein bL35 (65 aa).

Positions 1–15 (MPKMKTKKSASKRFT) are enriched in basic residues. The tract at residues 1–27 (MPKMKTKKSASKRFTARPNGSFKRGQA) is disordered.

It belongs to the bacterial ribosomal protein bL35 family.

The chain is Large ribosomal subunit protein bL35 from Cupriavidus pinatubonensis (strain JMP 134 / LMG 1197) (Cupriavidus necator (strain JMP 134)).